A 340-amino-acid chain; its full sequence is 4-dimethylallyltryptophan N-methyltransferase easF (340 aa).

The protein belongs to the methyltransferase superfamily. As to quaternary structure, homodimer.

It catalyses the reaction 4-(3-methylbut-2-enyl)-L-tryptophan + S-adenosyl-L-methionine = 4-(3-methylbut-2-enyl)-L-abrine + S-adenosyl-L-homocysteine + H(+). It participates in alkaloid biosynthesis; ergot alkaloid biosynthesis. In terms of biological role, 4-dimethylallyltryptophan N-methyltransferase; part of the gene cluster that mediates the biosynthesis of fungal ergot alkaloid. DmaW catalyzes the first step of ergot alkaloid biosynthesis by condensing dimethylallyl diphosphate (DMAP) and tryptophan to form 4-dimethylallyl-L-tryptophan. The second step is catalyzed by the methyltransferase easF that methylates 4-dimethylallyl-L-tryptophan in the presence of S-adenosyl-L-methionine, resulting in the formation of 4-dimethylallyl-L-abrine. The catalase easC and the FAD-dependent oxidoreductase easE then transform 4-dimethylallyl-L-abrine to chanoclavine-I which is further oxidized by easD in the presence of NAD(+), resulting in the formation of chanoclavine-I aldehyde. Chanoclavine-I aldehyde is the precursor of ergoamides and ergopeptines in Clavicipitaceae, and clavine-type alcaloids such as fumiclavine in Trichocomaceae. However, the metabolites downstream of chanoclavine-I aldehyde in Arthrodermataceae have not been identified yet. In Trichophyton verrucosum (strain HKI 0517), this protein is 4-dimethylallyltryptophan N-methyltransferase easF.